The primary structure comprises 2408 residues: Protein ELYS (2408 aa).

The interval 1–492 is seven-bladed beta propeller repeats; the sequence is MQNLEAQVTG…SGLIHFACTG (492 aa). The disordered stretch occupies residues 1016–2408; it reads YSLPSLVWRE…AKPVTRRKMR (1393 aa). Residues 1124–1145 show a composition bias toward polar residues; that stretch reads PLTSSDTDNNQTPHKSPLLKTS. A compositionally biased stretch (acidic residues) spans 1457-1466; that stretch reads NDQDSEEIEE. 2 stretches are compositionally biased toward polar residues: residues 1705–1719 and 1735–1750; these read INEGQVSPNRDQSTL and PADSSTDIIGNITLPT. Over residues 2136 to 2149 the composition is skewed to basic and acidic residues; the sequence is QASKIQEDLSDTPR. Sufficient for chromatin-binding stretches follow at residues 2281 to 2359 and 2359 to 2408; these read STQY…PVEI and IKLI…RKMR. The segment at 2281–2408 is sufficient to block nuclear pore assembly; the sequence is STQYVFSPPS…AKPVTRRKMR (128 aa). Positions 2329–2341 form a DNA-binding region, a.T hook; it reads SKPRGRPPKHKAK. Positions 2331-2348 are enriched in basic residues; sequence PRGRPPKHKAKAVTRVLK. Positions 2378–2389 are enriched in basic and acidic residues; it reads DSTEAKGAEKIS.

Belongs to the ELYS family. In terms of assembly, interacts with the Nup107-160 subcomplex of the NPC.

It localises to the nucleus. The protein localises to the nuclear pore complex. The protein resides in the cytoplasm. Its subcellular location is the nucleoplasm. In terms of biological role, required for the assembly of a functional nuclear pore complex (NPC) on the surface of chromosomes as nuclei form at the end of mitosis. May initiate NPC assembly by binding to chromatin and recruiting the Nup107-160 subcomplex, which may in turn recruit membrane vesicles containing pom121 and tmem48/ndc1. Association with chromatin may require the presence of the mcm2-mcm7 complex, suggesting a mechanism for coordination of nuclear assembly and the inactivation of replication licensing. The chain is Protein ELYS (ahctf1) from Xenopus laevis (African clawed frog).